Consider the following 313-residue polypeptide: Olfactory receptor 4M1 (313 aa).

Residues 1-25 are Extracellular-facing; sequence METANYTKVTEFVLTGLSQTREVQL. Residue N5 is glycosylated (N-linked (GlcNAc...) asparagine). Residues 26–49 traverse the membrane as a helical segment; the sequence is VLFVIFLSFYLFILPGNILIICTI. Topologically, residues 50–57 are cytoplasmic; sequence RLDPHLTS. The chain crosses the membrane as a helical span at residues 58–79; that stretch reads PMYFLLANLALLDIWYSSITAP. Over 80–100 the chain is Extracellular; it reads KMLIDFFVERKIISFGGCIAQ. A disulfide bridge links C97 with C189. A helical transmembrane segment spans residues 101 to 120; the sequence is LFFLHFVGASEMFLLTVMAY. Residues 121–139 lie on the Cytoplasmic side of the membrane; sequence DRYAAICRPLHYATIMNRR. The chain crosses the membrane as a helical span at residues 140–158; sequence LCCILVALSWMGGFIHSII. The Extracellular portion of the chain corresponds to 159-195; it reads QVALIVRLPFCGPNELDSYFCDITQVVRIACANTFPE. Residues 196 to 219 traverse the membrane as a helical segment; it reads ELVMICSSGLISVVCFIALLMSYA. Over 220–237 the chain is Cytoplasmic; the sequence is FLLALLKKHSGSGENTNR. Residues 238–260 traverse the membrane as a helical segment; sequence AMSTCYSHITIVVLMFGPSIYIY. Topologically, residues 261–271 are extracellular; it reads ARPFDSFSLDK. A helical membrane pass occupies residues 272 to 291; that stretch reads VVSVFHTVIFPLLNPIIYTL. Residues 292–313 lie on the Cytoplasmic side of the membrane; sequence RNKEVKAAMRKVVTKYILCEEK.

The protein belongs to the G-protein coupled receptor 1 family. In terms of tissue distribution, highly expressed in the testis and olfactory bulb.

It localises to the cell membrane. Olfactory receptor that acts as a receptor of Asprosin hormone, potentially at the surface of hepatocytes and may help to promote hepatocyte glucose release. The polypeptide is Olfactory receptor 4M1 (Homo sapiens (Human)).